The primary structure comprises 58 residues: Ferredoxin-2 (58 aa).

2 4Fe-4S ferredoxin-type domains span residues 2–27 (IEVN…MNEE) and 30–58 (KAVV…IVRS). C8 contacts [3Fe-4S] cluster. A Cysteine methyl disulfide modification is found at C11. C14 lines the [3Fe-4S] cluster pocket. A disulfide bridge connects residues C18 and C42. C50 is a [3Fe-4S] cluster binding site.

Homodimer (ferredoxin I) or homotetramer (ferredoxin II). Requires [3Fe-4S] cluster as cofactor. The cofactor is [4Fe-4S] cluster.

In terms of biological role, ferredoxins are iron-sulfur proteins that transfer electrons in a wide variety of metabolic reactions. The polypeptide is Ferredoxin-2 (Megalodesulfovibrio gigas (Desulfovibrio gigas)).